The chain runs to 345 residues: uncharacterized protein (345 aa).

Belongs to the Gfo/Idh/MocA family. Biliverdin reductase subfamily.

This is an uncharacterized protein from Escherichia coli (strain K12).